The primary structure comprises 456 residues: 26S proteasome non-ATPase regulatory subunit 12 (456 aa).

Alanine 2 bears the N-acetylalanine mark. Lysine 92 is covalently cross-linked (Glycyl lysine isopeptide (Lys-Gly) (interchain with G-Cter in SUMO1); alternate). Residue lysine 92 forms a Glycyl lysine isopeptide (Lys-Gly) (interchain with G-Cter in SUMO2); alternate linkage. Lysine 221 and lysine 368 each carry N6-acetyllysine. The 179-residue stretch at 242 to 420 (SICKHYRAIY…GIINFQRPKD (179 aa)) folds into the PCI domain.

This sequence belongs to the proteasome subunit p55 family. Component of the 19S proteasome regulatory particle complex. The 26S proteasome consists of a 20S core particle (CP) and two 19S regulatory subunits (RP). The regulatory particle is made of a lid composed of 9 subunits including PSMD12, a base containing 6 ATPases and few additional components. Interacts with ERCC6.

Component of the 26S proteasome, a multiprotein complex involved in the ATP-dependent degradation of ubiquitinated proteins. This complex plays a key role in the maintenance of protein homeostasis by removing misfolded or damaged proteins, which could impair cellular functions, and by removing proteins whose functions are no longer required. Therefore, the proteasome participates in numerous cellular processes, including cell cycle progression, apoptosis, or DNA damage repair. This is 26S proteasome non-ATPase regulatory subunit 12 (PSMD12) from Bos taurus (Bovine).